Here is a 454-residue protein sequence, read N- to C-terminus: Bifunctional protein GlmU (454 aa).

The segment at 1 to 226 (MALNVVILAA…AIEVEGANNR (226 aa)) is pyrophosphorylase. Residues 8–11 (LAAG), lysine 22, glutamine 73, 78–79 (GT), 100–102 (YGD), glycine 137, glutamate 151, asparagine 166, and asparagine 224 contribute to the UDP-N-acetyl-alpha-D-glucosamine site. Residue aspartate 102 participates in Mg(2+) binding. Asparagine 224 is a binding site for Mg(2+). Positions 227–247 (VQLAQLERAYQAREAEKLMIA) are linker. The N-acetyltransferase stretch occupies residues 248-454 (GANLRDPSRI…GWQRPVKIKK (207 aa)). Residues arginine 330 and lysine 348 each contribute to the UDP-N-acetyl-alpha-D-glucosamine site. Histidine 360 serves as the catalytic Proton acceptor. UDP-N-acetyl-alpha-D-glucosamine contacts are provided by tyrosine 363 and asparagine 374. Residues alanine 377, 383–384 (NY), serine 402, alanine 420, and arginine 437 contribute to the acetyl-CoA site.

In the N-terminal section; belongs to the N-acetylglucosamine-1-phosphate uridyltransferase family. This sequence in the C-terminal section; belongs to the transferase hexapeptide repeat family. In terms of assembly, homotrimer. Requires Mg(2+) as cofactor.

The protein localises to the cytoplasm. It carries out the reaction alpha-D-glucosamine 1-phosphate + acetyl-CoA = N-acetyl-alpha-D-glucosamine 1-phosphate + CoA + H(+). The catalysed reaction is N-acetyl-alpha-D-glucosamine 1-phosphate + UTP + H(+) = UDP-N-acetyl-alpha-D-glucosamine + diphosphate. The protein operates within nucleotide-sugar biosynthesis; UDP-N-acetyl-alpha-D-glucosamine biosynthesis; N-acetyl-alpha-D-glucosamine 1-phosphate from alpha-D-glucosamine 6-phosphate (route II): step 2/2. It participates in nucleotide-sugar biosynthesis; UDP-N-acetyl-alpha-D-glucosamine biosynthesis; UDP-N-acetyl-alpha-D-glucosamine from N-acetyl-alpha-D-glucosamine 1-phosphate: step 1/1. Its pathway is bacterial outer membrane biogenesis; LPS lipid A biosynthesis. Its function is as follows. Catalyzes the last two sequential reactions in the de novo biosynthetic pathway for UDP-N-acetylglucosamine (UDP-GlcNAc). The C-terminal domain catalyzes the transfer of acetyl group from acetyl coenzyme A to glucosamine-1-phosphate (GlcN-1-P) to produce N-acetylglucosamine-1-phosphate (GlcNAc-1-P), which is converted into UDP-GlcNAc by the transfer of uridine 5-monophosphate (from uridine 5-triphosphate), a reaction catalyzed by the N-terminal domain. This chain is Bifunctional protein GlmU, found in Shewanella sp. (strain ANA-3).